The sequence spans 369 residues: Leucine-specific-binding protein (369 aa).

A signal peptide spans Met-1–Ala-23. Cys-76 and Cys-101 are oxidised to a cystine.

The protein belongs to the leucine-binding protein family.

The protein resides in the periplasm. In terms of biological role, this protein is a component of the leucine-specific transport system, which is one of the two periplasmic binding protein-dependent transport systems of the high-affinity transport of the branched-chain amino acids. This chain is Leucine-specific-binding protein (livK), found in Salmonella typhi.